A 445-amino-acid polypeptide reads, in one-letter code: Phosphoglucosamine mutase (445 aa).

The active-site Phosphoserine intermediate is the Ser99. Mg(2+) contacts are provided by Ser99, Asp242, Asp244, and Asp246. Ser99 carries the phosphoserine modification.

It belongs to the phosphohexose mutase family. Mg(2+) serves as cofactor. Post-translationally, activated by phosphorylation.

It catalyses the reaction alpha-D-glucosamine 1-phosphate = D-glucosamine 6-phosphate. Functionally, catalyzes the conversion of glucosamine-6-phosphate to glucosamine-1-phosphate. In Helicobacter pylori (strain G27), this protein is Phosphoglucosamine mutase.